The chain runs to 34 residues: Chlorotoxin-like peptide AaCtx (34 aa).

4 cysteine pairs are disulfide-bonded: cysteine 2–cysteine 19, cysteine 5–cysteine 27, cysteine 16–cysteine 32, and cysteine 20–cysteine 34.

Belongs to the short scorpion toxin superfamily. Chloride channel inhibitor family. In terms of tissue distribution, expressed by the venom gland.

Its subcellular location is the secreted. In terms of biological role, toxin with unknown function in healthy organisms. On glioma cells, interacts with chloride channels (probably ClC-3/CLCN3) and MMP2 at the surface of glioma cells. This complex is then internalized via caveolae, thus inhibiting the chloride channels necessary for cell shrinkage and tumor propagation. Inhibits migration and invasion of U87 glioma cells expressing CLCN3/ClC-3 voltage-gated chloride channels. In Androctonus australis (Sahara scorpion), this protein is Chlorotoxin-like peptide AaCtx.